The chain runs to 1873 residues: Girdin (1873 aa).

Residues 12–132 (QFMTSPLVTW…KLLLLLLGCA (121 aa)) enclose the Calponin-homology (CH) domain. Positions 196–425 (HLRRLIDERD…EMAQKQSMDE (230 aa)) form a coiled coil. Phosphoserine occurs at positions 233, 237, and 449. Coiled-coil stretches lie at residues 458-1232 (TSSK…ESKN) and 1268-1385 (HKNL…KFYD). 2 disordered regions span residues 816 to 841 (ENKSLEQETSQLEKDKKQLEKENKRL) and 1013 to 1034 (EERMVQSSIPVSGEDDKWGRES). At serine 1020 the chain carries Phosphoserine. The residue at position 1387 (serine 1387) is a Phosphoserine. The tract at residues 1390-1408 (RRRGNWITLKMRKLIKSKK) is phosphoinositide-binding. Residues 1407–1416 (KKDINRERQK) are compositionally biased toward basic and acidic residues. 3 disordered regions span residues 1407–1459 (KKDI…LGTK), 1560–1602 (TTSF…SNNN), and 1616–1643 (QSRPQSHSSGDFSLLHDHETWSSSGSSP). Serine 1417 bears the Phosphoserine; by PKB/AKT1 mark. 4 stretches are compositionally biased toward polar residues: residues 1417-1430 (SLTLTPTRSDSSEG), 1445-1459 (VGSNSLEDGQTLGTK), 1560-1579 (TTSFEDISPQGISDDSSTGS), and 1616-1626 (QSRPQSHSSGD). Position 1421 is a phosphothreonine (threonine 1421). The short motif at 1674–1704 (KAGSPGSEVVTLQQFLEESNKLTSIQLKSSS) is the GBA element. Phosphoserine occurs at positions 1677, 1692, and 1719. The SH2-like; required for interaction with growth factor receptors stretch occupies residues 1715–1825 (SLSVSSDFLG…GTTRRTSIHD (111 aa)). A disordered region spans residues 1738 to 1873 (SGKTPGDFYD…KSRSREQQSS (136 aa)). The segment covering 1745 to 1755 (FYDRRTTKPEF) has biased composition (basic and acidic residues). At tyrosine 1767 the chain carries Phosphotyrosine. Composition is skewed to polar residues over residues 1768–1781 (TISSAGKPTPSTQG), 1789–1801 (TSVSRQSKDSNPY), and 1809–1820 (SVISTAEGTTRR). Tyrosine 1801 is modified (phosphotyrosine). Residues serine 1822 and serine 1839 each carry the phosphoserine modification. Basic and acidic residues predominate over residues 1822 to 1832 (SIHDFLSKDSR). Residues 1839–1852 (SSPPTAGSSSTTAS) are compositionally biased toward low complexity. Basic and acidic residues predominate over residues 1858–1873 (QESRNSKSRSREQQSS).

The protein belongs to the CCDC88 family. In terms of assembly, homodimer. Interacts (via GBA motif) with guanine nucleotide-binding protein G(i) alpha subunits GNAI1, GNAI2 and GNAI3. Also interacts (via GNA motif) with guanine nucleotide-binding protein G(s) alpha subunit GNAS. Interaction with G(i) alpha subunits occurs before interaction with GNAS and is regulated by phosphorylation; phosphorylation at Ser-1677 enhances binding to G(i) alpha subunits while phosphorylation at Ser-1692 abolishes G(i) alpha subunit binding, promoting binding to GNAS. Interacts (via C-terminal SH2-like region) with growth factor receptors EGFR, INSR and KDR/VEGFR2 (via their autophosphorylated cytoplasmic tails). Forms a complex with EGFR and GNAI3 which leads to enhanced EGFR signaling and triggering of cell migration; ligand stimulation is required for recruitment of GNAI3 to the complex. Interacts (tyrosine-phosphorylated form) with phosphatidylinositol 3-kinase (PI3K) regulatory subunit PIK3R1/p85a (via SH2 domains); the interaction enables recruitment of PIK3R1 to the EGFR receptor, enhancing PI3K activity and cell migration. Interacts with serine/threonine-protein kinase PRKCQ; the interaction leads to phosphorylation of CCDC88A and inhibition of its guanine nucleotide exchange factor activity. Interacts (via C-terminus) with DISC1; the interaction is direct. Interacts with AKT proteins; the interaction is inhibited in the presence of DISC1. Interacts with AKT1/PKB (via C-terminus). The non-phosphorylated form interacts with phosphatidylinositol 4-phosphate [Pi(4)P] and weakly with phosphatidylinositol 3-phosphate [Pi(3)P]. Interacts with microtubules. Interacts with actin. Post-translationally, phosphorylation is induced by epidermal growth factor (EGF) in a phosphoinositide 3-kinase (PI3K)-dependent manner. Phosphorylation by AKT1/PKB is necessary for the delocalization from the cell membrane and for cell migration. Phosphorylated on tyrosine residues which promotes binding to phosphatidylinositol 3-kinase (PI3K) regulatory subunit PIK3R1/p85a and enhances PI3K activity. Tyrosine-phosphorylated by both receptor and non-receptor tyrosine kinases in vitro. Tyrosine phosphorylation is required for AKT1-dependent phosphorylation of Ser-1417. Phosphorylation at Ser-1692 by PRKCQ disrupts interaction with GNAI3 and inhibits guanine nucleotide exchange factor activity. Expressed in the dentate gyrus, pyramidal cell layer of hippocampal regions CA1 and CA3 at postnatal 15. Expressed highly in neurons. Weakly in neuron progenitors (at protein level). Expressed in the dentate granule cell layer of the hippocampus. Expressed highly in the adult testis, moderately in the brain and at a low level in the spleen, lungs and fat.

The protein resides in the cell membrane. The protein localises to the cytoplasm. It is found in the cytosol. Its subcellular location is the cytoplasmic vesicle. It localises to the cell projection. The protein resides in the lamellipodium. The protein localises to the cytoskeleton. It is found in the cilium basal body. Its subcellular location is the microtubule organizing center. It localises to the centrosome. The protein resides in the centriole. Bifunctional modulator of guanine nucleotide-binding proteins (G proteins). Acts as a non-receptor guanine nucleotide exchange factor which binds to and activates guanine nucleotide-binding protein G(i) alpha subunits. Also acts as a guanine nucleotide dissociation inhibitor for guanine nucleotide-binding protein G(s) subunit alpha GNAS. Essential for cell migration. Interacts in complex with G(i) alpha subunits with the EGFR receptor, retaining EGFR at the cell membrane following ligand stimulation and promoting EGFR signaling which triggers cell migration. Binding to Gi-alpha subunits displaces the beta and gamma subunits from the heterotrimeric G-protein complex which enhances phosphoinositide 3-kinase (PI3K)-dependent phosphorylation and kinase activity of AKT1/PKB. Phosphorylation of AKT1/PKB induces the phosphorylation of downstream effectors GSK3 and FOXO1/FKHR, and regulates DNA replication and cell proliferation. Binds in its tyrosine-phosphorylated form to the phosphatidylinositol 3-kinase (PI3K) regulatory subunit PIK3R1 which enables recruitment of PIK3R1 to the EGFR receptor, enhancing PI3K activity and cell migration. Plays a role as a key modulator of the AKT-mTOR signaling pathway, controlling the tempo of the process of newborn neuron integration during adult neurogenesis, including correct neuron positioning, dendritic development and synapse formation. Inhibition of G(s) subunit alpha GNAS leads to reduced cellular levels of cAMP and suppression of cell proliferation. Essential for the integrity of the actin cytoskeleton. Required for formation of actin stress fibers and lamellipodia. May be involved in membrane sorting in the early endosome. Plays a role in ciliogenesis and cilium morphology and positioning and this may partly be through regulation of the localization of scaffolding protein CROCC/Rootletin. This Mus musculus (Mouse) protein is Girdin (Ccdc88a).